The following is a 392-amino-acid chain: Cell division protein DivIB (392 aa).

Residues methionine 1 to glutamate 87 form a disordered region. Residues methionine 1–methionine 131 are Cytoplasmic-facing. Over residues lysine 14–alanine 32 the composition is skewed to basic and acidic residues. The span at threonine 58–asparagine 76 shows a compositional bias: acidic residues. A helical membrane pass occupies residues tryptophan 132–leucine 152. Residues serine 153–histidine 224 enclose the POTRA domain. Topologically, residues serine 153–asparagine 392 are extracellular. Positions isoleucine 368 to asparagine 392 are disordered.

Belongs to the FtsQ/DivIB family. DivIB subfamily.

The protein resides in the cell membrane. Functionally, cell division protein that may be involved in stabilizing or promoting the assembly of the division complex. The protein is Cell division protein DivIB of Lactococcus lactis subsp. lactis (strain IL1403) (Streptococcus lactis).